We begin with the raw amino-acid sequence, 142 residues long: ATP synthase epsilon chain (142 aa).

The protein belongs to the ATPase epsilon chain family. F-type ATPases have 2 components, CF(1) - the catalytic core - and CF(0) - the membrane proton channel. CF(1) has five subunits: alpha(3), beta(3), gamma(1), delta(1), epsilon(1). CF(0) has three main subunits: a, b and c.

It is found in the cell inner membrane. Produces ATP from ADP in the presence of a proton gradient across the membrane. The chain is ATP synthase epsilon chain from Mannheimia succiniciproducens (strain KCTC 0769BP / MBEL55E).